The following is a 367-amino-acid chain: Germination protease (367 aa).

The propeptide occupies 1–15 (MKEPLDLSKYSVRTD).

It belongs to the peptidase A25 family. Homotetramer. Post-translationally, autoproteolytically processed. The inactive tetrameric zymogen termed p46 autoprocesses to a smaller form termed p41, which is active only during spore germination.

The enzyme catalyses Endopeptidase action with P4 Glu or Asp, P1 preferably Glu &gt; Asp, P1' hydrophobic and P2' Ala.. Its function is as follows. Initiates the rapid degradation of small, acid-soluble proteins during spore germination. The chain is Germination protease from Bacillus thuringiensis subsp. konkukian (strain 97-27).